The primary structure comprises 100 residues: MPKDKKEAIYTIPLSRVYWGRRTNRAARAIKLVRKFIARHFGVKEEDVIIHNNVNEYIWSRSIEKPPRRVTVKAVKDPETGKVKVMLIRESKIQQGQATS.

Belongs to the eukaryotic ribosomal protein eL31 family.

This chain is Large ribosomal subunit protein eL31, found in Hyperthermus butylicus (strain DSM 5456 / JCM 9403 / PLM1-5).